The sequence spans 411 residues: Putative ion-transport protein YfeO (411 aa).

11 consecutive transmembrane segments (helical) span residues Met9–Ala29, Asp54–Ile74, Ala99–Pro119, Ile149–Ile169, Leu186–Pro206, Ile223–Cys243, Val258–Leu278, Leu296–Ala316, Gly322–His342, Val343–Val363, and Leu386–Ala406.

The protein belongs to the chloride channel (TC 2.A.49) family.

It localises to the cell membrane. In Salmonella paratyphi A (strain ATCC 9150 / SARB42), this protein is Putative ion-transport protein YfeO.